Reading from the N-terminus, the 270-residue chain is Phosphoserine phosphatase (270 aa).

Asp-67 (nucleophile) is an active-site residue. Mg(2+)-binding residues include Asp-67 and Asp-69. Asp-69 acts as the Proton donor in catalysis. Substrate-binding positions include Glu-76, Arg-112, 156–157 (SG), and Lys-205. Asp-227 provides a ligand contact to Mg(2+).

The protein belongs to the HAD-like hydrolase superfamily. SerB family. Mg(2+) serves as cofactor.

The catalysed reaction is O-phospho-L-serine + H2O = L-serine + phosphate. The enzyme catalyses O-phospho-D-serine + H2O = D-serine + phosphate. It participates in amino-acid biosynthesis; L-serine biosynthesis; L-serine from 3-phospho-D-glycerate: step 3/3. Functionally, catalyzes the last step in the biosynthesis of serine from carbohydrates. The reaction mechanism proceeds via the formation of a phosphoryl-enzyme intermediates. In Drosophila melanogaster (Fruit fly), this protein is Phosphoserine phosphatase (aay).